The sequence spans 303 residues: MSQNHDPAMLAKAETLTEALPYLQRYAGKTFVVKYGGHAMGDPELAQDFAEDIVLLKAVGINPVVVHGGGPQIGRMLKALGIESRFVDGLRVTDKQTAEVAEMVLAGAINKELVSWIARAGGKAIGISGKDGGMVIARKVEAKKAPKAVADAESGDPIVVDLGFVGEPDRIDTTVIDTICKAGMIPVIAPIGVGEDGETYNINADTMAGSIAAALGAARLFLLTDVPGVLDKDKNLLTDLRPADIARLAEDGTISGGMIPKLETCVHAVEAGCEATVVLDGRVPHAMLLEIFTARGAGTLIRA.

Substrate is bound by residues 69-70 (GG), R91, and N201.

This sequence belongs to the acetylglutamate kinase family. ArgB subfamily.

It is found in the cytoplasm. The catalysed reaction is N-acetyl-L-glutamate + ATP = N-acetyl-L-glutamyl 5-phosphate + ADP. It participates in amino-acid biosynthesis; L-arginine biosynthesis; N(2)-acetyl-L-ornithine from L-glutamate: step 2/4. Functionally, catalyzes the ATP-dependent phosphorylation of N-acetyl-L-glutamate. This Novosphingobium aromaticivorans (strain ATCC 700278 / DSM 12444 / CCUG 56034 / CIP 105152 / NBRC 16084 / F199) protein is Acetylglutamate kinase.